The chain runs to 488 residues: ATP synthase subunit beta (488 aa).

164–171 (GGAGVGKT) serves as a coordination point for ATP.

It belongs to the ATPase alpha/beta chains family. As to quaternary structure, F-type ATPases have 2 components, CF(1) - the catalytic core - and CF(0) - the membrane proton channel. CF(1) has five subunits: alpha(3), beta(3), gamma(1), delta(1), epsilon(1). CF(0) has four main subunits: a(1), b(1), b'(1) and c(9-12).

The protein localises to the cellular thylakoid membrane. The enzyme catalyses ATP + H2O + 4 H(+)(in) = ADP + phosphate + 5 H(+)(out). Produces ATP from ADP in the presence of a proton gradient across the membrane. The catalytic sites are hosted primarily by the beta subunits. The polypeptide is ATP synthase subunit beta (Prochlorococcus marinus (strain MIT 9303)).